Here is a 38-residue protein sequence, read N- to C-terminus: Large ribosomal subunit protein bL36 (38 aa).

Belongs to the bacterial ribosomal protein bL36 family.

The chain is Large ribosomal subunit protein bL36 from Mycoplasma mobile (strain ATCC 43663 / 163K / NCTC 11711) (Mesomycoplasma mobile).